A 115-amino-acid polypeptide reads, in one-letter code: Cytochrome c (115 aa).

Cys26, Cys29, His30, and Met91 together coordinate heme c.

This sequence belongs to the cytochrome c family. Binds 1 heme c group covalently per subunit.

It localises to the mitochondrion intermembrane space. Electron carrier protein. The oxidized form of the cytochrome c heme group can accept an electron from the heme group of the cytochrome c1 subunit of cytochrome reductase. Cytochrome c then transfers this electron to the cytochrome oxidase complex, the final protein carrier in the mitochondrial electron-transport chain. In Theileria parva (East coast fever infection agent), this protein is Cytochrome c.